Here is a 435-residue protein sequence, read N- to C-terminus: Keratin, type I cytoskeletal 18 (435 aa).

Low complexity predominate over residues Met-1 to Ser-28. Residues Met-1–Pro-36 are disordered. Residues Ser-2–Asn-88 are head. The interval Glu-89–Ala-123 is coil 1A. One can recognise an IF rod domain in the interval Glu-89–Leu-399. The tract at residues Leu-124 to Ile-140 is linker 1. The coil 1B stretch occupies residues Ile-141–Leu-232. The segment at Arg-233–Ile-256 is linker 12. Residues Met-257–Gly-394 are coil 2. The tract at residues Gly-395–Phe-435 is tail.

This sequence belongs to the intermediate filament family. Heterotetramer of two type I and two type II keratins. Keratin-18 associates with keratin-8. In terms of processing, phosphorylated. Proteolytically cleaved by caspases during epithelial cell apoptosis. As to expression, abundantly expressed in an even distribution throughout the optic nerve, localizing specifically to the astrocyte domains. Moderately expressed in spinal cord, brain, liver and oocytes.

Its function is as follows. When phosphorylated, plays a role in filament reorganization. In Carassius auratus (Goldfish), this protein is Keratin, type I cytoskeletal 18 (krt18).